The chain runs to 232 residues: NAD(P)H-hydrate epimerase (232 aa).

The region spanning 9–219 (AISVDEELFN…KLQDKYAMEL (211 aa)) is the YjeF N-terminal domain. 62 to 66 (NNGGD) contacts (6S)-NADPHX. Residues Asn-63 and Asp-127 each contribute to the K(+) site. (6S)-NADPHX is bound by residues 131–137 (GFSFKPP) and Asp-160. Ser-163 is a K(+) binding site.

Belongs to the NnrE/AIBP family. K(+) serves as cofactor.

It carries out the reaction (6R)-NADHX = (6S)-NADHX. It catalyses the reaction (6R)-NADPHX = (6S)-NADPHX. In terms of biological role, catalyzes the epimerization of the S- and R-forms of NAD(P)HX, a damaged form of NAD(P)H that is a result of enzymatic or heat-dependent hydration. This is a prerequisite for the S-specific NAD(P)H-hydrate dehydratase to allow the repair of both epimers of NAD(P)HX. In Aedes aegypti (Yellowfever mosquito), this protein is NAD(P)H-hydrate epimerase.